Reading from the N-terminus, the 1826-residue chain is Transcription initiation factor TFIID subunit 1-like (1826 aa).

Disordered stretches follow at residues 118–141 (DESQ…YDED), 532–555 (IPDE…SSLK), and 1252–1276 (RLKR…MKER). A compositionally biased stretch (basic and acidic residues) spans 1252-1268 (RLKRNQEKEKLKGPPEK). The Nuclear localization signal signature appears at 1370–1377 (PPKKKRRV). 2 consecutive Bromo domains span residues 1395–1503 (RRRT…LKEK) and 1517–1626 (LLDD…ITEY). Residues 1648 to 1826 (AELESLDPMT…SGEHKDGHGK (179 aa)) form a disordered region. Polar residues predominate over residues 1660–1700 (PYTSQPPDMYDTNTSLSTSRDASVFQDESNLSVLDISTATP). Acidic residues-rich tracts occupy residues 1714 to 1729 (EDSD…EEED), 1740 to 1750 (GDGDLADEEEG), and 1768 to 1783 (EGED…EEGD). The span at 1787-1797 (SAIQLSESGSD) shows a compositional bias: polar residues. Basic and acidic residues predominate over residues 1817–1826 (SGEHKDGHGK).

The protein belongs to the TAF1 family. Can bind directly to TATA-box binding protein (TBP). Interacts (via bromo domains) with acetylated lysine residues on the N-terminus of histone H1.4, H2A, H2B, H3 and H4 (in vitro). As to expression, testis specific, expressed apparently in germ cells.

The protein localises to the nucleus. Its function is as follows. May act as a functional substitute for TAF1/TAFII250 during male meiosis, when sex chromosomes are transcriptionally silenced. This is Transcription initiation factor TFIID subunit 1-like (TAF1L) from Homo sapiens (Human).